We begin with the raw amino-acid sequence, 587 residues long: Urease subunit alpha (587 aa).

In terms of domain architecture, Urease spans 134-572 (GGIDTHVHFI…LPLAQRYLYT (439 aa)). Positions 139, 141, and 222 each coordinate Ni(2+). Lysine 222 bears the N6-carboxylysine mark. A substrate-binding site is contributed by histidine 224. Histidine 251 and histidine 277 together coordinate Ni(2+). Histidine 325 functions as the Proton donor in the catalytic mechanism. Aspartate 365 is a binding site for Ni(2+).

This sequence belongs to the metallo-dependent hydrolases superfamily. Urease alpha subunit family. As to quaternary structure, heterotrimer of UreA (gamma), UreB (beta) and UreC (alpha) subunits. Three heterotrimers associate to form the active enzyme. It depends on Ni cation as a cofactor. Carboxylation allows a single lysine to coordinate two nickel ions.

The protein localises to the cytoplasm. It catalyses the reaction urea + 2 H2O + H(+) = hydrogencarbonate + 2 NH4(+). The protein operates within nitrogen metabolism; urea degradation; CO(2) and NH(3) from urea (urease route): step 1/1. The chain is Urease subunit alpha from Clostridium perfringens.